A 227-amino-acid polypeptide reads, in one-letter code: Testis-expressed protein 30 (227 aa).

This Homo sapiens (Human) protein is Testis-expressed protein 30 (TEX30).